The following is a 510-amino-acid chain: Pentatricopeptide repeat-containing protein At1g71060, mitochondrial (510 aa).

Residues 1–14 (MVFSRFFRVTGVNL) constitute a mitochondrion transit peptide. 10 PPR repeats span residues 127–157 (TTSN…MKAK), 161–195 (SKET…GFKM), 196–230 (ESSD…RFEP), 231–265 (DIKS…GFEP), 266–300 (DVVA…NCKP), 301–335 (SPHI…GFPL), 336–370 (EAPT…GVGP), 371–401 (NART…MSCE), 403–437 (TVST…GVLP), and 438–472 (GMHM…GIRP).

This sequence belongs to the PPR family. P subfamily.

Its subcellular location is the mitochondrion. This Arabidopsis thaliana (Mouse-ear cress) protein is Pentatricopeptide repeat-containing protein At1g71060, mitochondrial.